The primary structure comprises 302 residues: Urease accessory protein UreD (302 aa).

This sequence belongs to the UreD family. As to quaternary structure, ureD, UreF and UreG form a complex that acts as a GTP-hydrolysis-dependent molecular chaperone, activating the urease apoprotein by helping to assemble the nickel containing metallocenter of UreC. The UreE protein probably delivers the nickel.

It localises to the cytoplasm. Required for maturation of urease via the functional incorporation of the urease nickel metallocenter. The sequence is that of Urease accessory protein UreD from Pseudoalteromonas translucida (strain TAC 125).